A 760-amino-acid chain; its full sequence is MTISPPESGEKDKKILESPVKADPRPIDFAKLDKPGFWSSKLSKGPKTTTWIWNLHADAHDFDVHTGDAEEATRKIFSAHFGHLAVIFIWMSAAFFHGARFSNYSGWLADPTHVKPGAQQVWAIVGQEMLNGDLGANYNGIQISSGVFHMWRAWGITNESELMALAIGAVVMAALMLHAGIFHYHKAAPKMEWFQDVESMMNHHLAGLLGLGSLAWAGHTIHIGAPTAALLDAIDAGSPLIINGKEIATIADIPMPHQLCDPQIVGQIFPGLASGTGNFFSLNWFAFSDFLTFKGGLNPVTGSLWMTDIAHHHLAIAVLFIIAGHMYRTNYGIGHSMKEILDAHQGDPILFPAPRGHQGLFDFMAESRHAQLSVNLALLGSLSIIISHHMYAMPPYPYIATDYMTVLGLFTHHMWIGGLFIVGAGAHAGIAMVRDYDPAKHIDNVLDRVLKARDALISHLNWVCMWLGFHSFGLYIHNDTMRALGRPQDMFSDKAIQLQPIFAQWIQNIQSSGVGTTLLEGNGVSQVFNGETISVGGKVAMTGIPLGTADLMIHHIHAFQIHVTVLILLKGVLYARSSRLIPDKASLGFRFPCDGPGRGGTCQVSSWDHVFLALFWMYNCLSIVIFHFSWKMQSDVWGLTGGNFAQSAITINGWLRDFLWAQAAQVLTSYGQSISMYGLMFLGAHFIWAFSLMFLFSGRGYWQELFESIVWAHNKLKVAPTIQPRALSITQGRAVGVTHFLVGGIATTWAFFHARLFGIG.

Residues Met1–Ala22 form a disordered region. Basic and acidic residues predominate over residues Ser8 to Ala22. 8 consecutive transmembrane segments (helical) span residues Ile76–Ala99, Leu162–His185, Met201–Ala225, Ile309–Tyr327, Arg368–Tyr391, Leu407–Val433, Ala455–His477, and Leu551–Leu569. Residues Cys593 and Cys602 each coordinate [4Fe-4S] cluster. 2 helical membrane-spanning segments follow: residues His609–Trp630 and Ile674–Phe696. Residue His685 coordinates divinylchlorophyll a'. The divinyl chlorophyll a site is built by Met693 and Tyr701. Position 702 (Trp702) interacts with phylloquinone. The helical transmembrane segment at Ala734 to Ala754 threads the bilayer.

It belongs to the PsaA/PsaB family. The PsaA/B heterodimer binds the P700 divinyl chlorophyll special pair and subsequent electron acceptors. PSI consists of a core antenna complex that captures photons, and an electron transfer chain that converts photonic excitation into a charge separation. The cyanobacterial PSI reaction center is composed of one copy each of PsaA,B,C,D,E,F,I,J,K,L,M and X, and forms trimeric complexes. Requires PSI electron transfer chain: 5 divinyl chlorophyll a, 1 divinyl chlorophyll a', 2 phylloquinones and 3 4Fe-4S clusters. PSI core antenna: 90 divinyl chlorophyll a, 22 carotenoids, 3 phospholipids and 1 galactolipid. P700 is a divinyl chlorophyll a/divinyl chlorophyll a' dimer, A0 is one or more divinyl chlorophyll a, A1 is one or both phylloquinones and FX is a shared 4Fe-4S iron-sulfur center. as cofactor.

The protein localises to the cellular thylakoid membrane. It carries out the reaction reduced [plastocyanin] + hnu + oxidized [2Fe-2S]-[ferredoxin] = oxidized [plastocyanin] + reduced [2Fe-2S]-[ferredoxin]. Its function is as follows. PsaA and PsaB bind P700, the primary electron donor of photosystem I (PSI), as well as the electron acceptors A0, A1 and FX. PSI is a plastocyanin/cytochrome c6-ferredoxin oxidoreductase, converting photonic excitation into a charge separation, which transfers an electron from the donor P700 chlorophyll pair to the spectroscopically characterized acceptors A0, A1, FX, FA and FB in turn. Oxidized P700 is reduced on the lumenal side of the thylakoid membrane by plastocyanin or cytochrome c6. The protein is Photosystem I P700 chlorophyll a apoprotein A1 of Prochlorococcus marinus (strain MIT 9515).